Consider the following 191-residue polypeptide: Orotate phosphoribosyltransferase (191 aa).

A 5-phospho-alpha-D-ribose 1-diphosphate-binding site is contributed by 114 to 122 (EDVITTGGS). 2 residues coordinate orotate: Thr-118 and Arg-146.

Belongs to the purine/pyrimidine phosphoribosyltransferase family. PyrE subfamily. Homodimer. It depends on Mg(2+) as a cofactor.

The enzyme catalyses orotidine 5'-phosphate + diphosphate = orotate + 5-phospho-alpha-D-ribose 1-diphosphate. It functions in the pathway pyrimidine metabolism; UMP biosynthesis via de novo pathway; UMP from orotate: step 1/2. In terms of biological role, catalyzes the transfer of a ribosyl phosphate group from 5-phosphoribose 1-diphosphate to orotate, leading to the formation of orotidine monophosphate (OMP). This Caldicellulosiruptor saccharolyticus (strain ATCC 43494 / DSM 8903 / Tp8T 6331) protein is Orotate phosphoribosyltransferase.